A 232-amino-acid polypeptide reads, in one-letter code: F420-dependent NADP reductase (232 aa).

Residues 15 to 18 (TGDQ), 37 to 38 (SR), Lys-42, Val-80, Val-106, and Ala-151 contribute to the NADP(+) site.

It belongs to the F420-dependent NADP reductase family. In terms of assembly, homotetramer.

The catalysed reaction is reduced coenzyme F420-(gamma-L-Glu)(n) + NADP(+) = oxidized coenzyme F420-(gamma-L-Glu)(n) + NADPH + 2 H(+). In terms of biological role, catalyzes the reduction of NADP(+) with F420H(2) via hydride transfer, and likely the reverse reaction, i.e. the reduction of F420 with NADPH. Probably functions in the regeneration of NADPH required in biosynthetic reactions. Is specific for reduced F420 as electron donor for the reduction of NADP; neither reduced FAD nor FMN can act as electron donor. The enzyme is also specific for NADP; NAD is not utilized as substrate. The sequence is that of F420-dependent NADP reductase (fno) from Methanothermobacter thermautotrophicus (strain ATCC 29096 / DSM 1053 / JCM 10044 / NBRC 100330 / Delta H) (Methanobacterium thermoautotrophicum).